A 376-amino-acid polypeptide reads, in one-letter code: D-alanine--D-alanine ligase B (376 aa).

The ATP-grasp domain occupies 155–361; sequence KRLMRDAGLP…QTDLMDKLIA (207 aa). 184-239 contributes to the ATP binding site; that stretch reads AALGTPDLFVKPANLGSSVGVSRARSEEEFAASCALAFRYDRKILVEQALNGAREI. Asp-316, Glu-328, and Asn-330 together coordinate Mg(2+).

Belongs to the D-alanine--D-alanine ligase family. Mg(2+) serves as cofactor. Mn(2+) is required as a cofactor.

The protein localises to the cytoplasm. The enzyme catalyses 2 D-alanine + ATP = D-alanyl-D-alanine + ADP + phosphate + H(+). Its pathway is cell wall biogenesis; peptidoglycan biosynthesis. Its function is as follows. Cell wall formation. The chain is D-alanine--D-alanine ligase B from Bradyrhizobium diazoefficiens (strain JCM 10833 / BCRC 13528 / IAM 13628 / NBRC 14792 / USDA 110).